Here is a 137-residue protein sequence, read N- to C-terminus: Transcription antitermination protein NusB (137 aa).

This sequence belongs to the NusB family.

In terms of biological role, involved in transcription antitermination. Required for transcription of ribosomal RNA (rRNA) genes. Binds specifically to the boxA antiterminator sequence of the ribosomal RNA (rrn) operons. This is Transcription antitermination protein NusB from Clavibacter sepedonicus (Clavibacter michiganensis subsp. sepedonicus).